The chain runs to 591 residues: V-type ATP synthase alpha chain (591 aa).

Glycine 233 to threonine 240 contributes to the ATP binding site.

This sequence belongs to the ATPase alpha/beta chains family.

The enzyme catalyses ATP + H2O + 4 H(+)(in) = ADP + phosphate + 5 H(+)(out). Its function is as follows. Produces ATP from ADP in the presence of a proton gradient across the membrane. The V-type alpha chain is a catalytic subunit. The sequence is that of V-type ATP synthase alpha chain from Streptococcus pyogenes serotype M5 (strain Manfredo).